Here is a 255-residue protein sequence, read N- to C-terminus: MIFQTIRQQQPLIHCITNYVVANFQANGLLALGASPVMADDSHEVEEMVAIAEALLINIGTLNDRTKEAMLLAGKKANTLGIPVILDPVGAGATVYRKETVHLLLTDIQFAVIRCNKGELAALVNVEWQQKGVDSGDGFIDIETEATLLAQRYNCIVIVTGEHDFMTDGVQSQWITGGNSQMTEVTGTGCLLSAICGAAYSSGEDPYSQLVETLTYYKKAAELASAFTEDIGDIQIALLNALHRLSKEGEASCIL.

A substrate-binding site is contributed by Met38. The ATP site is built by Arg114 and Thr160. A substrate-binding site is contributed by Gly187.

It belongs to the Thz kinase family. It depends on Mg(2+) as a cofactor.

It carries out the reaction 5-(2-hydroxyethyl)-4-methylthiazole + ATP = 4-methyl-5-(2-phosphooxyethyl)-thiazole + ADP + H(+). Its pathway is cofactor biosynthesis; thiamine diphosphate biosynthesis; 4-methyl-5-(2-phosphoethyl)-thiazole from 5-(2-hydroxyethyl)-4-methylthiazole: step 1/1. Functionally, catalyzes the phosphorylation of the hydroxyl group of 4-methyl-5-beta-hydroxyethylthiazole (THZ). The chain is Hydroxyethylthiazole kinase from Lysinibacillus sphaericus (strain C3-41).